Here is a 28-residue protein sequence, read N- to C-terminus: U1-poneritoxin-Da4a (28 aa).

Ala28 bears the Alanine amide mark.

As to expression, expressed by the venom gland.

It localises to the secreted. Shows a broad spectrum of activity against both Gram-positive and Gram-negative bacteria. Also has antimicrobial activity against S.cerevisiae. Has insecticidal and non-hemolytic activity. In Dinoponera australis (Giant neotropical hunting ant), this protein is U1-poneritoxin-Da4a.